Here is a 298-residue protein sequence, read N- to C-terminus: Mitochondrial 2-oxodicarboxylate carrier (298 aa).

Solcar repeat units lie at residues 10-99, 106-195, and 204-293; these read HETS…YKKF, SPGL…VKNI, and LEFL…TYAW. The next 6 helical transmembrane spans lie at 16-36, 69-88, 112-132, 166-186, 204-224, and 276-296; these read VAAG…LDVV, FGFY…KRAV, LIAG…FEVV, GLNK…MVYF, LEFL…SVFN, and LGPG…WLQE.

This sequence belongs to the mitochondrial carrier (TC 2.A.29) family.

The protein resides in the mitochondrion inner membrane. The enzyme catalyses 2-oxoadipate(in) + 2-oxoglutarate(out) = 2-oxoadipate(out) + 2-oxoglutarate(in). The catalysed reaction is hexanedioate(in) + 2-oxoglutarate(out) = hexanedioate(out) + 2-oxoglutarate(in). It carries out the reaction L-2-aminoadipate(in) + 2-oxoglutarate(out) = L-2-aminoadipate(out) + 2-oxoglutarate(in). It catalyses the reaction glutarate(in) + 2-oxoglutarate(out) = glutarate(out) + 2-oxoglutarate(in). The enzyme catalyses 2-oxoheptanedioate(in) + 2-oxoglutarate(out) = 2-oxoheptanedioate(out) + 2-oxoglutarate(in). The catalysed reaction is heptanedioate(in) + 2-oxoglutarate(out) = heptanedioate(out) + 2-oxoglutarate(in). It carries out the reaction citrate(in) + 2-oxoglutarate(out) = citrate(out) + 2-oxoglutarate(in). Functionally, transports dicarboxylates across the inner membranes of mitochondria by a counter-exchange mechanism. Can transport 2-oxoadipate (2-oxohexanedioate), 2-oxoglutarate, adipate (hexanedioate), glutarate, and to a lesser extent, pimelate (heptanedioate), 2-oxopimelate (2-oxoheptanedioate), 2-aminoadipate (2-aminohexanedioate), oxaloacetate, and citrate. Plays a central role in catabolism of lysine, hydroxylysine, and tryptophan, by transporting common metabolite intermediates (such as 2-oxoadipate) into the mitochondria, where it is converted into acetyl-CoA and can enter the citric acid (TCA) cycle. This Mus musculus (Mouse) protein is Mitochondrial 2-oxodicarboxylate carrier (Slc25a21).